The sequence spans 201 residues: Molybdenum cofactor guanylyltransferase (201 aa).

Residues 15 to 17, Lys-28, Asp-74, and Asp-104 contribute to the GTP site; that span reads LCG. Asp-104 is a Mg(2+) binding site.

This sequence belongs to the MobA family. Monomer. The cofactor is Mg(2+).

Its subcellular location is the cytoplasm. It carries out the reaction Mo-molybdopterin + GTP + H(+) = Mo-molybdopterin guanine dinucleotide + diphosphate. Transfers a GMP moiety from GTP to Mo-molybdopterin (Mo-MPT) cofactor (Moco or molybdenum cofactor) to form Mo-molybdopterin guanine dinucleotide (Mo-MGD) cofactor. The chain is Molybdenum cofactor guanylyltransferase from Ectopseudomonas mendocina (strain ymp) (Pseudomonas mendocina).